Reading from the N-terminus, the 366-residue chain is MNETGSIGIIETKYAEFKELILNNGSVLSPVVIAYETYGTLSSSKNNAILICHALSGDAHAAGYHSGSDKKPGWWDDYIGPGKSFDTNQYFIICSNVIGGCKGSSGPLSIHPETSTPYGSRFPFVSIQDMVKAQKLLVESLGIEKLFCVAGGSMGGMQALEWSIAYPNSLSNCIVMASTAEHSAMQIAFNEVGRQAILSDPNWKNGLYDENSPRKGLALARMVGHITYLSDDKMREKFGRNPPRGNILSTDFAVGSYLIYQGESFVDRFDANSYIYVTKALDHYSLGKGKELTAALSNATCRFLVVSYSSDWLYPPAQSREIVKSLEAADKRVFYVELQSGEGHDSFLLKNPKQIEILKGFLENPN.

Residues 47 to 349 form the AB hydrolase-1 domain; the sequence is NAILICHALS…SGEGHDSFLL (303 aa). The active-site Nucleophile is the Ser153. Arg221 provides a ligand contact to substrate. Active-site residues include Asp311 and His344. Asp345 provides a ligand contact to substrate.

It belongs to the AB hydrolase superfamily. MetX family. As to quaternary structure, homodimer.

It localises to the cytoplasm. The enzyme catalyses L-homoserine + acetyl-CoA = O-acetyl-L-homoserine + CoA. It participates in amino-acid biosynthesis; L-methionine biosynthesis via de novo pathway; O-acetyl-L-homoserine from L-homoserine: step 1/1. In terms of biological role, transfers an acetyl group from acetyl-CoA to L-homoserine, forming acetyl-L-homoserine. In Leptospira interrogans serogroup Icterohaemorrhagiae serovar copenhageni (strain Fiocruz L1-130), this protein is Homoserine O-acetyltransferase.